Here is a 128-residue protein sequence, read N- to C-terminus: Fluoride-specific ion channel FluC (128 aa).

The next 4 membrane-spanning stretches (helical) occupy residues Val4–Ile24, Phe37–Phe57, Thr65–Ser85, and Phe101–Ile121. Na(+) contacts are provided by Gly76 and Thr79.

The protein belongs to the fluoride channel Fluc/FEX (TC 1.A.43) family.

It localises to the cell inner membrane. The enzyme catalyses fluoride(in) = fluoride(out). Na(+) is not transported, but it plays an essential structural role and its presence is essential for fluoride channel function. Its function is as follows. Fluoride-specific ion channel. Important for reducing fluoride concentration in the cell, thus reducing its toxicity. In Desulfotalea psychrophila (strain LSv54 / DSM 12343), this protein is Fluoride-specific ion channel FluC.